The following is a 231-amino-acid chain: Probable transaldolase (231 aa).

Catalysis depends on Lys-83, which acts as the Schiff-base intermediate with substrate.

This sequence belongs to the transaldolase family. Type 3B subfamily.

The protein localises to the cytoplasm. It catalyses the reaction D-sedoheptulose 7-phosphate + D-glyceraldehyde 3-phosphate = D-erythrose 4-phosphate + beta-D-fructose 6-phosphate. It functions in the pathway carbohydrate degradation; pentose phosphate pathway; D-glyceraldehyde 3-phosphate and beta-D-fructose 6-phosphate from D-ribose 5-phosphate and D-xylulose 5-phosphate (non-oxidative stage): step 2/3. Functionally, transaldolase is important for the balance of metabolites in the pentose-phosphate pathway. This is Probable transaldolase from Rhodospirillum centenum (strain ATCC 51521 / SW).